A 145-amino-acid chain; its full sequence is 3-hydroxyacyl-[acyl-carrier-protein] dehydratase FabZ (145 aa).

H48 is an active-site residue.

It belongs to the thioester dehydratase family. FabZ subfamily.

It localises to the cytoplasm. It catalyses the reaction a (3R)-hydroxyacyl-[ACP] = a (2E)-enoyl-[ACP] + H2O. Its function is as follows. Involved in unsaturated fatty acids biosynthesis. Catalyzes the dehydration of short chain beta-hydroxyacyl-ACPs and long chain saturated and unsaturated beta-hydroxyacyl-ACPs. This chain is 3-hydroxyacyl-[acyl-carrier-protein] dehydratase FabZ, found in Stutzerimonas stutzeri (strain A1501) (Pseudomonas stutzeri).